The sequence spans 562 residues: Septation ring formation regulator EzrA (562 aa).

The Extracellular segment spans residues 1–2 (ME). Residues 3-21 (FVIGLLIVLLALFAAGYFF) traverse the membrane as a helical segment. Residues 22–562 (RKKIYAEIDR…VEKIKADISA (541 aa)) are Cytoplasmic-facing. 2 coiled-coil regions span residues 377–425 (YSLL…LKKT) and 470–497 (MEEAGAHLKQAEDIVNRASRESEELVEQ).

It belongs to the EzrA family. Post-translationally, may be degraded by FtsH protease.

Its subcellular location is the cell membrane. It localises to the membrane raft. Negative regulator of FtsZ ring formation; modulates the frequency and position of FtsZ ring formation. Inhibits FtsZ ring formation at polar sites. Interacts either with FtsZ or with one of its binding partners to promote depolymerization. This is Septation ring formation regulator EzrA from Bacillus subtilis (strain 168).